Consider the following 381-residue polypeptide: 1-deoxy-D-xylulose 5-phosphate reductoisomerase (381 aa).

Residues Gly-13, Ser-14, Ile-15, Asn-40, and Asn-114 each coordinate NADPH. Lys-115 provides a ligand contact to 1-deoxy-D-xylulose 5-phosphate. Position 116 (Glu-116) interacts with NADPH. A Mn(2+)-binding site is contributed by Asp-140. The 1-deoxy-D-xylulose 5-phosphate site is built by Ser-141, Glu-142, Ser-166, and His-189. Residue Glu-142 coordinates Mn(2+). Gly-195 contacts NADPH. The 1-deoxy-D-xylulose 5-phosphate site is built by Ser-202, Asn-207, Lys-208, and Glu-211. Residue Glu-211 coordinates Mn(2+).

Belongs to the DXR family. Mg(2+) is required as a cofactor. Requires Mn(2+) as cofactor.

It catalyses the reaction 2-C-methyl-D-erythritol 4-phosphate + NADP(+) = 1-deoxy-D-xylulose 5-phosphate + NADPH + H(+). Its pathway is isoprenoid biosynthesis; isopentenyl diphosphate biosynthesis via DXP pathway; isopentenyl diphosphate from 1-deoxy-D-xylulose 5-phosphate: step 1/6. Catalyzes the NADPH-dependent rearrangement and reduction of 1-deoxy-D-xylulose-5-phosphate (DXP) to 2-C-methyl-D-erythritol 4-phosphate (MEP). This chain is 1-deoxy-D-xylulose 5-phosphate reductoisomerase, found in Treponema denticola (strain ATCC 35405 / DSM 14222 / CIP 103919 / JCM 8153 / KCTC 15104).